A 353-amino-acid chain; its full sequence is 3-ketosteroid-9-alpha-monooxygenase, ferredoxin reductase component (353 aa).

Positions Ser8–Lys117 constitute an FAD-binding FR-type domain. The 2Fe-2S ferredoxin-type domain maps to Ala264–Glu353. Cys300, Cys305, Cys308, and Cys338 together coordinate [2Fe-2S] cluster.

Monomer. The two-component system 3-ketosteroid-9-alpha-monooxygenase is composed of an oxygenase component KshA and a reductase component KshB. Requires FAD as cofactor. The cofactor is [2Fe-2S] cluster.

It catalyses the reaction androsta-1,4-diene-3,17-dione + 2 reduced [2Fe-2S]-[ferredoxin] + O2 + 2 H(+) = 9alpha-hydroxyandrosta-1,4-diene-3,17-dione + 2 oxidized [2Fe-2S]-[ferredoxin] + H2O. The protein operates within lipid metabolism; steroid biosynthesis. In terms of biological role, involved in the degradation of cholesterol. Catalyzes the introduction of a 9a-hydroxyl moiety into 1,4-androstadiene-3,17-dione (ADD) to yield the 9alpha-hydroxy-1,4-androstadiene-3,17-dione (9OHADD) intermediate which spontaneously form 3-hydroxy-9,10-seconandrost-1,3,5(10)-triene-9,17-dione (HSA) via the meta-cleavage of ring B with concomitant aromatization of ring A. This chain is 3-ketosteroid-9-alpha-monooxygenase, ferredoxin reductase component (kshB), found in Mycolicibacterium smegmatis (strain ATCC 700084 / mc(2)155) (Mycobacterium smegmatis).